A 769-amino-acid chain; its full sequence is Neutral alpha-glucosidase C (769 aa).

Asp366 functions as the Nucleophile in the catalytic mechanism. Residue Glu369 is part of the active site. Residue Asp442 is the Proton donor of the active site.

The protein belongs to the glycosyl hydrolase 31 family.

The catalysed reaction is Hydrolysis of terminal, non-reducing (1-&gt;4)-linked alpha-D-glucose residues with release of alpha-D-glucose.. In terms of biological role, has alpha-glucosidase activity. This chain is Neutral alpha-glucosidase C (GANC), found in Macaca fascicularis (Crab-eating macaque).